The chain runs to 314 residues: 1D-myo-inositol 2-acetamido-2-deoxy-alpha-D-glucopyranoside deacetylase 2 (314 aa).

Zn(2+)-binding residues include histidine 25, aspartate 28, and histidine 161.

Belongs to the MshB deacetylase family. Zn(2+) serves as cofactor.

It carries out the reaction 1D-myo-inositol 2-acetamido-2-deoxy-alpha-D-glucopyranoside + H2O = 1D-myo-inositol 2-amino-2-deoxy-alpha-D-glucopyranoside + acetate. In terms of biological role, catalyzes the deacetylation of 1D-myo-inositol 2-acetamido-2-deoxy-alpha-D-glucopyranoside (GlcNAc-Ins) in the mycothiol biosynthesis pathway. In Frankia casuarinae (strain DSM 45818 / CECT 9043 / HFP020203 / CcI3), this protein is 1D-myo-inositol 2-acetamido-2-deoxy-alpha-D-glucopyranoside deacetylase 2.